We begin with the raw amino-acid sequence, 269 residues long: Formamidopyrimidine-DNA glycosylase (269 aa).

The Schiff-base intermediate with DNA role is filled by Pro-2. Glu-3 functions as the Proton donor in the catalytic mechanism. Residue Lys-57 is the Proton donor; for beta-elimination activity of the active site. Residues His-90, Arg-109, and Arg-150 each contribute to the DNA site. Residues 235–269 (NVYGRAGQPCVQCDAILKADRHGQRSTAYCPQCQR) form an FPG-type zinc finger. The active-site Proton donor; for delta-elimination activity is Arg-259.

Belongs to the FPG family. In terms of assembly, monomer. The cofactor is Zn(2+).

It carries out the reaction Hydrolysis of DNA containing ring-opened 7-methylguanine residues, releasing 2,6-diamino-4-hydroxy-5-(N-methyl)formamidopyrimidine.. The catalysed reaction is 2'-deoxyribonucleotide-(2'-deoxyribose 5'-phosphate)-2'-deoxyribonucleotide-DNA = a 3'-end 2'-deoxyribonucleotide-(2,3-dehydro-2,3-deoxyribose 5'-phosphate)-DNA + a 5'-end 5'-phospho-2'-deoxyribonucleoside-DNA + H(+). In terms of biological role, involved in base excision repair of DNA damaged by oxidation or by mutagenic agents. Acts as a DNA glycosylase that recognizes and removes damaged bases. Has a preference for oxidized purines, such as 7,8-dihydro-8-oxoguanine (8-oxoG). Has AP (apurinic/apyrimidinic) lyase activity and introduces nicks in the DNA strand. Cleaves the DNA backbone by beta-delta elimination to generate a single-strand break at the site of the removed base with both 3'- and 5'-phosphates. The chain is Formamidopyrimidine-DNA glycosylase from Alcanivorax borkumensis (strain ATCC 700651 / DSM 11573 / NCIMB 13689 / SK2).